The primary structure comprises 147 residues: Large-conductance mechanosensitive channel (147 aa).

2 helical membrane-spanning segments follow: residues 14-34 (VVDMAVGIVIGAAFGSIVKSL) and 85-105 (FGLFVNAIISFTIVAFALFMI).

It belongs to the MscL family. In terms of assembly, homopentamer.

Its subcellular location is the cell inner membrane. Its function is as follows. Channel that opens in response to stretch forces in the membrane lipid bilayer. May participate in the regulation of osmotic pressure changes within the cell. This chain is Large-conductance mechanosensitive channel, found in Tolumonas auensis (strain DSM 9187 / NBRC 110442 / TA 4).